Here is a 288-residue protein sequence, read N- to C-terminus: uncharacterized protein (288 aa).

This is an uncharacterized protein from Ictaluridae (bullhead catfishes).